Reading from the N-terminus, the 116-residue chain is Integration host factor subunit alpha (116 aa).

Disordered regions lie at residues 58-80 (FGNF…GETI) and 94-116 (QKLK…EAAE). Positions 94-105 (QKLKSTVEQSGN) are enriched in polar residues.

It belongs to the bacterial histone-like protein family. Heterodimer of an alpha and a beta chain.

Its function is as follows. This protein is one of the two subunits of integration host factor, a specific DNA-binding protein that functions in genetic recombination as well as in transcriptional and translational control. In Bordetella avium (strain 197N), this protein is Integration host factor subunit alpha.